Here is a 112-residue protein sequence, read N- to C-terminus: Large ribosomal subunit protein P1w (112 aa).

The segment at 85–112 is disordered; the sequence is AAAPAAEEKKKDEPAEESDGDLGFGLFD. Phosphoserine is present on Ser-102.

It belongs to the eukaryotic ribosomal protein P1/P2 family. P1 and P2 exist as dimers at the large ribosomal subunit.

In terms of biological role, plays an important role in the elongation step of protein synthesis. In Arabidopsis thaliana (Mouse-ear cress), this protein is Large ribosomal subunit protein P1w (RPP1A).